Here is a 149-residue protein sequence, read N- to C-terminus: Large ribosomal subunit protein uL13 (149 aa).

This sequence belongs to the universal ribosomal protein uL13 family. As to quaternary structure, part of the 50S ribosomal subunit.

Its function is as follows. This protein is one of the early assembly proteins of the 50S ribosomal subunit, although it is not seen to bind rRNA by itself. It is important during the early stages of 50S assembly. This is Large ribosomal subunit protein uL13 from Cyanothece sp. (strain PCC 7425 / ATCC 29141).